We begin with the raw amino-acid sequence, 167 residues long: Small ribosomal subunit protein uS5 (167 aa).

Residues 12–75 (LQEKLIAVNR…EKARRNMVTV (64 aa)) form the S5 DRBM domain.

It belongs to the universal ribosomal protein uS5 family. Part of the 30S ribosomal subunit. Contacts proteins S4 and S8.

With S4 and S12 plays an important role in translational accuracy. Its function is as follows. Located at the back of the 30S subunit body where it stabilizes the conformation of the head with respect to the body. The chain is Small ribosomal subunit protein uS5 from Shewanella sp. (strain W3-18-1).